Here is a 277-residue protein sequence, read N- to C-terminus: Large ribosomal subunit protein uL2 (277 aa).

Disordered regions lie at residues 38–58 (HRKGGRNNQGRLTVRHQGGGH) and 219–277 (TVRG…RKNK).

Belongs to the universal ribosomal protein uL2 family. As to quaternary structure, part of the 50S ribosomal subunit. Forms a bridge to the 30S subunit in the 70S ribosome.

One of the primary rRNA binding proteins. Required for association of the 30S and 50S subunits to form the 70S ribosome, for tRNA binding and peptide bond formation. It has been suggested to have peptidyltransferase activity; this is somewhat controversial. Makes several contacts with the 16S rRNA in the 70S ribosome. In Bacillus pumilus (strain SAFR-032), this protein is Large ribosomal subunit protein uL2.